A 225-amino-acid polypeptide reads, in one-letter code: Phosphoserine phosphatase (225 aa).

The residue at position 1 (methionine 1) is an N-acetylmethionine. Aspartate 20 (nucleophile) is an active-site residue. Mg(2+) is bound by residues aspartate 20 and aspartate 22. L-serine is bound at residue 20–22 (DVD). Aspartate 22 serves as the catalytic Proton donor. Methionine 52 contributes to the O-phospho-L-serine binding site. Position 53 (glycine 53) interacts with phosphate. L-serine-binding positions include 109–111 (SGG) and lysine 158. O-phospho-L-serine contacts are provided by residues 109-111 (SGG) and lysine 158. Aspartate 179 contributes to the Mg(2+) binding site. Threonine 182 serves as a coordination point for O-phospho-L-serine. Threonine 182 contributes to the phosphate binding site.

This sequence belongs to the HAD-like hydrolase superfamily. SerB family. In terms of assembly, homodimer. It depends on Mg(2+) as a cofactor.

It is found in the cytoplasm. The protein resides in the cytosol. It catalyses the reaction O-phospho-L-serine + H2O = L-serine + phosphate. The enzyme catalyses O-phospho-D-serine + H2O = D-serine + phosphate. The protein operates within amino-acid biosynthesis; L-serine biosynthesis; L-serine from 3-phospho-D-glycerate: step 3/3. Functionally, catalyzes the last irreversible step in the biosynthesis of L-serine from carbohydrates, the dephosphorylation of O-phospho-L-serine to L-serine. L-serine can then be used in protein synthesis, to produce other amino acids, in nucleotide metabolism or in glutathione synthesis, or can be racemized to D-serine, a neuromodulator. May also act on O-phospho-D-serine. This Rattus norvegicus (Rat) protein is Phosphoserine phosphatase.